The following is a 419-amino-acid chain: Putative L-glutamine:3-amino-2,3-dideoxy-scyllo-inosose aminotransferase (419 aa).

K199 carries the N6-(pyridoxal phosphate)lysine modification.

This sequence belongs to the DegT/DnrJ/EryC1 family. L-glutamine:2-deoxy-scyllo-inosose/scyllo-inosose aminotransferase subfamily. Requires pyridoxal 5'-phosphate as cofactor.

The catalysed reaction is 3-amino-2,3-dideoxy-scyllo-inosose + L-glutamine = 2-deoxystreptamine + 2-oxoglutaramate. It functions in the pathway metabolic intermediate biosynthesis; 2-deoxystreptamine biosynthesis; 2-deoxystreptamine from D-glucose 6-phosphate: step 4/4. The protein operates within antibiotic biosynthesis; kanamycin biosynthesis. Functionally, catalyzes the transamination of 3-amino-2,3-dideoxy-scyllo-inosose (amino-DOI) into 2-deoxystreptamine (DOS). The sequence is that of Putative L-glutamine:3-amino-2,3-dideoxy-scyllo-inosose aminotransferase (kanD) from Streptomyces kanamyceticus.